Consider the following 85-residue polypeptide: Putative transmembrane protein ORF85 (85 aa).

The next 2 helical transmembrane spans lie at 12 to 32 (FPPTTLIVLALGSAIAYKFLS) and 44 to 64 (LGIILVFLGHGGVISTIGAGI).

Its subcellular location is the host membrane. The chain is Putative transmembrane protein ORF85 from Acidianus convivator (ABV).